A 953-amino-acid polypeptide reads, in one-letter code: Catenin alpha-2 (953 aa).

Thr632 is modified (phosphothreonine). Phosphoserine is present on residues Ser640, Ser651, and Ser901. A compositionally biased stretch (basic and acidic residues) spans 912–927; it reads EKKPLVKREKPEEFQT. The interval 912–939 is disordered; sequence EKKPLVKREKPEEFQTRVRRGSQKKHIS. Basic residues predominate over residues 928-938; it reads RVRRGSQKKHI. Ser939 bears the Phosphoserine mark.

This sequence belongs to the vinculin/alpha-catenin family. Interacts with CDH1 and CDH2. Interacts with ZNF639; recruits CTNNA2 to the nucleus. Interacts with F-actin. In terms of tissue distribution, expressed almost exclusively in the nervous system.

It localises to the cell membrane. Its subcellular location is the cytoplasm. The protein localises to the cytoskeleton. It is found in the cell junction. The protein resides in the adherens junction. It localises to the cell projection. Its subcellular location is the axon. The protein localises to the nucleus. May function as a linker between cadherin adhesion receptors and the cytoskeleton to regulate cell-cell adhesion and differentiation in the nervous system. Required for proper regulation of cortical neuronal migration and neurite growth. It acts as a negative regulator of Arp2/3 complex activity and Arp2/3-mediated actin polymerization. It thereby suppresses excessive actin branching which would impair neurite growth and stability. Regulates morphological plasticity of synapses and cerebellar and hippocampal lamination during development. Functions in the control of startle modulation. The protein is Catenin alpha-2 (Ctnna2) of Mus musculus (Mouse).